A 589-amino-acid polypeptide reads, in one-letter code: Class I diterpene synthase 2, chloroplastic (589 aa).

Residues Asp328, Asp332, Asn472, Thr476, and Glu480 each coordinate Mg(2+). The DDXXD motif motif lies at 328–332; the sequence is DDFFD.

It belongs to the terpene synthase family. Mg(2+) is required as a cofactor. In terms of tissue distribution, mostly expressed in trichomes of leaves and fruits.

Its subcellular location is the plastid. It is found in the chloroplast. The catalysed reaction is 9alpha-copalyl diphosphate + H2O = (13S)-vitexifolin A + diphosphate. It catalyses the reaction peregrinol diphosphate = (13R)-9,13-epoxylabd-14-ene + diphosphate. It carries out the reaction peregrinol diphosphate + H2O = viteagnusin D + diphosphate. It participates in secondary metabolite biosynthesis; terpenoid biosynthesis. Involved in the biosynthesis of labdane-type diterpenoid including cleroda-dienols, and peregrinol lactones and furan derivatives, dopaminergic diterpenoids that can bind to dopamine receptors in the human pituitary gland, have probably ability to lower prolactin levels, and are used to treat menstrual cycle disorders (e.g. premenstrual syndrome and mastodynia). Terpene synthase the catalyzes the conversion of peregrinol diphosphate to viteagnusin D and 9,13(R)-epoxy-labd-14-ene, and of syn-copalyl diphosophate to vitexifolin A. In Vitex agnus-castus (Chaste tree), this protein is Class I diterpene synthase 2, chloroplastic.